Here is a 737-residue protein sequence, read N- to C-terminus: Polyribonucleotide nucleotidyltransferase (737 aa).

Residues Asp-489 and Asp-495 each contribute to the Mg(2+) site. One can recognise a KH domain in the interval 556 to 615 (PKIDTIKIDVDKIKIVIGKGGETIDKIIAETGVKIDIDEEGNVSIYSSDQDAINRAKEII). In terms of domain architecture, S1 motif spans 625–693 (DEVYRAKVVR…EKGRIDASMK (69 aa)). Residues 691–737 (SMKALLPRPPKPEHDEKGEKSERPHRPRHHKDHKPKKEFTETPKDSE) are disordered. Positions 700–714 (PKPEHDEKGEKSERP) are enriched in basic and acidic residues. Residues 715 to 724 (HRPRHHKDHK) are compositionally biased toward basic residues. The segment covering 725-737 (PKKEFTETPKDSE) has biased composition (basic and acidic residues).

This sequence belongs to the polyribonucleotide nucleotidyltransferase family. Mg(2+) is required as a cofactor.

Its subcellular location is the cytoplasm. The enzyme catalyses RNA(n+1) + phosphate = RNA(n) + a ribonucleoside 5'-diphosphate. Functionally, involved in mRNA degradation. Catalyzes the phosphorolysis of single-stranded polyribonucleotides processively in the 3'- to 5'-direction. The sequence is that of Polyribonucleotide nucleotidyltransferase from Streptococcus pneumoniae (strain Taiwan19F-14).